A 177-amino-acid polypeptide reads, in one-letter code: Alkyl hydroperoxide reductase AhpD (177 aa).

C131 acts as the Proton donor in catalysis. A disulfide bridge links C131 with C134. The active-site Cysteine sulfenic acid (-SOH) intermediate is the C134.

Belongs to the AhpD family. In terms of assembly, homotrimer.

It carries out the reaction N(6)-[(R)-dihydrolipoyl]-L-lysyl-[lipoyl-carrier protein] + a hydroperoxide = N(6)-[(R)-lipoyl]-L-lysyl-[lipoyl-carrier protein] + an alcohol + H2O. Antioxidant protein with alkyl hydroperoxidase activity. Required for the reduction of the AhpC active site cysteine residues and for the regeneration of the AhpC enzyme activity. The sequence is that of Alkyl hydroperoxide reductase AhpD from Streptomyces avermitilis (strain ATCC 31267 / DSM 46492 / JCM 5070 / NBRC 14893 / NCIMB 12804 / NRRL 8165 / MA-4680).